A 461-amino-acid chain; its full sequence is Probable tubulin polyglutamylase TTLL9 (461 aa).

The segment covering 1–10 (MSRQKNQNSK) has biased composition (polar residues). A disordered region spans residues 1–20 (MSRQKNQNSKGHGVSKGKER). Positions 22-402 (QRTLIRFKTT…EARLTGKEKR (381 aa)) constitute a TTL domain. ATP contacts are provided by residues lysine 149 and 155–156 (QG). Glutamine 155 contacts a protein. The disordered stretch occupies residues 172–208 (RKGTSGKKPTGVETQPARANMNPSGSHDTRSSDDQKD). The span at 198 to 208 (HDTRSSDDQKD) shows a compositional bias: basic and acidic residues. ATP is bound by residues 218–221 (QRYV) and 231–233 (KFD). Arginine 257 serves as a coordination point for L-glutamate. 276–277 (TN) contributes to the ATP binding site. An L-glutamate-binding site is contributed by lysine 294. Positions 348, 361, and 363 each coordinate Mg(2+). Lysine 379 lines the L-glutamate pocket.

It belongs to the tubulin--tyrosine ligase family. Requires Mg(2+) as cofactor. Highly expressed in brain and testis. Expressed in heart, kidney and lung. In the brain, expressed in ependymal cilia, cortex, corpus callosum and striatum. In the testis, specifically expressed in the seminiferous tubules.

It localises to the cytoplasm. The protein resides in the cytoskeleton. The protein localises to the cilium basal body. It is found in the flagellum axoneme. The enzyme catalyses (L-glutamyl)(n)-gamma-L-glutamyl-L-glutamyl-[protein] + L-glutamate + ATP = (L-glutamyl)(n+1)-gamma-L-glutamyl-L-glutamyl-[protein] + ADP + phosphate + H(+). Functionally, probable tubulin polyglutamylase that generates side chains of glutamate on the gamma-carboxyl group of specific glutamate residues within the C-terminal tail of target proteins. Similar to TTLL1, may acquire enzymatic activity only in complex with other proteins as it is most likely lacking domains important for autonomous activity. Mediates tubulin polyglutamylation which induces establishment of microtubule heterogeneity in sperm flagella, thereby playing a role in normal motile flagella axoneme structure and sperm flagella beating pattern. In Mus musculus (Mouse), this protein is Probable tubulin polyglutamylase TTLL9.